A 208-amino-acid chain; its full sequence is Ras-related protein Rab-6 (208 aa).

Residues 14-21, Thr-38, 62-66, and 120-123 contribute to the GTP site; these read DQSVGKTS, TAGQE, and KTDL. Cys-208 carries the S-geranylgeranyl cysteine lipid modification.

The protein belongs to the small GTPase superfamily. Rab family.

Its function is as follows. Protein transport. Probably involved in vesicular traffic. The polypeptide is Ras-related protein Rab-6 (rab6) (Dictyostelium discoideum (Social amoeba)).